Reading from the N-terminus, the 118-residue chain is Protein TusC (118 aa).

Belongs to the DsrF/TusC family. In terms of assembly, heterohexamer, formed by a dimer of trimers. The hexameric TusBCD complex contains 2 copies each of TusB, TusC and TusD. The TusBCD complex interacts with TusE.

It is found in the cytoplasm. Its function is as follows. Part of a sulfur-relay system required for 2-thiolation of 5-methylaminomethyl-2-thiouridine (mnm(5)s(2)U) at tRNA wobble positions. The sequence is that of Protein TusC from Salmonella typhi.